Here is a 183-residue protein sequence, read N- to C-terminus: MSRIGKLPIHVPAGVTVTIKDNVVTVKGPKGELVQEVNPDINVTLEDGVIHLTRPTDDKNHRALHGLYRSLINNMVVGCSEGYKKELELVGVGYRVSNTGQLLDLSLGYTHNIYLQLPKEVKVETKSERNKNPLIILESADKQLLGQICAKIRSFRMPEPYKGKGIKFVGEEIRRKSGKSAGK.

This sequence belongs to the universal ribosomal protein uL6 family. As to quaternary structure, part of the 50S ribosomal subunit.

Its function is as follows. This protein binds to the 23S rRNA, and is important in its secondary structure. It is located near the subunit interface in the base of the L7/L12 stalk, and near the tRNA binding site of the peptidyltransferase center. The polypeptide is Large ribosomal subunit protein uL6 (Parabacteroides distasonis (strain ATCC 8503 / DSM 20701 / CIP 104284 / JCM 5825 / NCTC 11152)).